Reading from the N-terminus, the 444-residue chain is Tubulin beta-2 chain (444 aa).

8 residues coordinate GTP: Gln-11, Glu-69, Ser-138, Gly-142, Thr-143, Gly-144, Asn-204, and Asn-226. Residue Glu-69 participates in Mg(2+) binding.

Belongs to the tubulin family. In terms of assembly, dimer of alpha and beta chains. A typical microtubule is a hollow water-filled tube with an outer diameter of 25 nm and an inner diameter of 15 nM. Alpha-beta heterodimers associate head-to-tail to form protofilaments running lengthwise along the microtubule wall with the beta-tubulin subunit facing the microtubule plus end conferring a structural polarity. Microtubules usually have 13 protofilaments but different protofilament numbers can be found in some organisms and specialized cells. Requires Mg(2+) as cofactor.

The protein localises to the cytoplasm. Its subcellular location is the cytoskeleton. Tubulin is the major constituent of microtubules, a cylinder consisting of laterally associated linear protofilaments composed of alpha- and beta-tubulin heterodimers. Microtubules grow by the addition of GTP-tubulin dimers to the microtubule end, where a stabilizing cap forms. Below the cap, tubulin dimers are in GDP-bound state, owing to GTPase activity of alpha-tubulin. The polypeptide is Tubulin beta-2 chain (TUBB2) (Zea mays (Maize)).